A 615-amino-acid polypeptide reads, in one-letter code: Probable inactive purple acid phosphatase 24 (615 aa).

The signal sequence occupies residues 1 to 26 (MARVLGVLLCLLALFSSSLCLDHANG). N-linked (GlcNAc...) asparagine glycans are attached at residues N129, N267, and N275. Fe cation is bound at residue D297. N318 carries an N-linked (GlcNAc...) asparagine glycan. The Fe cation site is built by D338 and Y341. D338 is a binding site for Zn(2+). N371, H460, and H502 together coordinate Zn(2+). Residue N371 coordinates substrate. 502 to 504 (HVH) is a substrate binding site. A Fe cation-binding site is contributed by H504. An N-linked (GlcNAc...) asparagine glycan is attached at N592.

It belongs to the metallophosphoesterase superfamily. Purple acid phosphatase family. In terms of assembly, homodimer. Fe cation is required as a cofactor. Zn(2+) serves as cofactor. As to expression, specifically expressed in flowers.

The protein localises to the secreted. This is Probable inactive purple acid phosphatase 24 (PAP24) from Arabidopsis thaliana (Mouse-ear cress).